A 104-amino-acid chain; its full sequence is Protein enhancer of rudimentary (104 aa).

Phosphothreonine; by CK2 is present on threonine 18. Residue serine 24 is modified to Phosphoserine; by CK2.

The protein belongs to the E(R) family.

Its function is as follows. Acts as an enhancer of the rudimentary gene. Has a role in pyrimidine biosynthesis and the cell cycle. This chain is Protein enhancer of rudimentary (e(r)), found in Drosophila virilis (Fruit fly).